A 137-amino-acid polypeptide reads, in one-letter code: Large ribosomal subunit protein uL16 (137 aa).

The protein belongs to the universal ribosomal protein uL16 family. Part of the 50S ribosomal subunit.

Functionally, binds 23S rRNA and is also seen to make contacts with the A and possibly P site tRNAs. The polypeptide is Large ribosomal subunit protein uL16 (Mycoplasma mycoides subsp. mycoides SC (strain CCUG 32753 / NCTC 10114 / PG1)).